The sequence spans 119 residues: Holo-[acyl-carrier-protein] synthase (119 aa).

Residues D8 and E58 each coordinate Mg(2+).

Belongs to the P-Pant transferase superfamily. AcpS family. It depends on Mg(2+) as a cofactor.

It localises to the cytoplasm. The catalysed reaction is apo-[ACP] + CoA = holo-[ACP] + adenosine 3',5'-bisphosphate + H(+). In terms of biological role, transfers the 4'-phosphopantetheine moiety from coenzyme A to a Ser of acyl-carrier-protein. In Bacillus cereus (strain ATCC 10987 / NRS 248), this protein is Holo-[acyl-carrier-protein] synthase.